Consider the following 976-residue polypeptide: Leucine--tRNA ligase (976 aa).

The 'HIGH' region motif lies at 63–74 (PYPSGVGLHVGH). A 'KMSKS' region motif is present at residues 745-749 (KMGKS). K748 is an ATP binding site.

It belongs to the class-I aminoacyl-tRNA synthetase family.

It localises to the cytoplasm. It catalyses the reaction tRNA(Leu) + L-leucine + ATP = L-leucyl-tRNA(Leu) + AMP + diphosphate. In Corynebacterium jeikeium (strain K411), this protein is Leucine--tRNA ligase.